The following is a 563-amino-acid chain: Tripeptidyl-peptidase 1 (563 aa).

Positions 1-19 (MRLRTCLLGLLALCVASKC) are cleaved as a signal peptide. A propeptide spans 20-195 (SYSPEPDQQR…PEPQVSGTVG (176 aa)) (removed in mature form). Cysteine 111 and cysteine 122 are joined by a disulfide. A Peptidase S53 domain is found at 199-563 (GVTPSVIRQR…PALLKALIKP (365 aa)). Residues asparagine 210 and asparagine 222 are each glycosylated (N-linked (GlcNAc...) asparagine). Active-site charge relay system residues include glutamate 272 and aspartate 276. N-linked (GlcNAc...) asparagine glycans are attached at residues asparagine 286, asparagine 313, and asparagine 443. Intrachain disulfides connect cysteine 365/cysteine 526 and cysteine 522/cysteine 537. Serine 475 (charge relay system) is an active-site residue. Ca(2+) is bound by residues aspartate 517 and valine 518. Ca(2+) is bound by residues glycine 539, glycine 541, and aspartate 543.

As to quaternary structure, monomer. Interacts with CLN5. Interacts with CLN3. Requires Ca(2+) as cofactor. In terms of processing, activated by autocatalytic proteolytical processing upon acidification. N-glycosylation is required for processing and activity.

The protein resides in the lysosome. It is found in the melanosome. It catalyses the reaction Release of an N-terminal tripeptide from a polypeptide, but also has endopeptidase activity.. Its function is as follows. Lysosomal serine protease with tripeptidyl-peptidase I activity. May act as a non-specific lysosomal peptidase which generates tripeptides from the breakdown products produced by lysosomal proteinases. Requires substrates with an unsubstituted N-terminus. In Canis lupus familiaris (Dog), this protein is Tripeptidyl-peptidase 1 (TPP1).